The following is a 387-amino-acid chain: Galactokinase (387 aa).

Glu-32–Asp-35 is a substrate binding site. Residues Ser-66 and Gly-123–Ser-129 each bind ATP. Mg(2+) is bound by residues Ser-129 and Glu-161. Residue Asp-173 is the Proton acceptor of the active site. Tyr-223 contributes to the substrate binding site.

It belongs to the GHMP kinase family. GalK subfamily.

The protein localises to the cytoplasm. The enzyme catalyses alpha-D-galactose + ATP = alpha-D-galactose 1-phosphate + ADP + H(+). It participates in carbohydrate metabolism; galactose metabolism. Functionally, catalyzes the transfer of the gamma-phosphate of ATP to D-galactose to form alpha-D-galactose-1-phosphate (Gal-1-P). This Enterococcus faecalis (strain ATCC 700802 / V583) protein is Galactokinase.